We begin with the raw amino-acid sequence, 376 residues long: Cysteine synthase 1 (376 aa).

A mitochondrion-targeting transit peptide spans 1–16; it reads MFRHGVRTFATTSLRR. Lys-79 is subject to N6-(pyridoxal phosphate)lysine. Residues Asn-109, 215 to 219, and Ser-314 contribute to the pyridoxal 5'-phosphate site; that span reads GTGGT.

Belongs to the cysteine synthase/cystathionine beta-synthase family. It depends on pyridoxal 5'-phosphate as a cofactor.

Its subcellular location is the mitochondrion. It catalyses the reaction O-succinyl-L-serine + hydrogen sulfide = L-cysteine + succinate. The catalysed reaction is O-acetyl-L-serine + hydrogen sulfide = L-cysteine + acetate. It participates in amino-acid biosynthesis; L-cysteine biosynthesis; L-cysteine from L-serine: step 2/2. In terms of biological role, catalyzes the conversion of O-succinyl-L-serine into cysteine, the last step in the cysteine biosynthesis pathway. Can also use O-acetyl-L-serine. In Neurospora crassa (strain ATCC 24698 / 74-OR23-1A / CBS 708.71 / DSM 1257 / FGSC 987), this protein is Cysteine synthase 1 (cys-17).